A 426-amino-acid chain; its full sequence is Serine--tRNA ligase (426 aa).

231–233 (TSE) is a binding site for L-serine. 262-264 (RSE) provides a ligand contact to ATP. An L-serine-binding site is contributed by E285. An ATP-binding site is contributed by 349 to 352 (EISS). S385 is an L-serine binding site.

The protein belongs to the class-II aminoacyl-tRNA synthetase family. Type-1 seryl-tRNA synthetase subfamily. Homodimer. The tRNA molecule binds across the dimer.

It localises to the cytoplasm. It carries out the reaction tRNA(Ser) + L-serine + ATP = L-seryl-tRNA(Ser) + AMP + diphosphate + H(+). It catalyses the reaction tRNA(Sec) + L-serine + ATP = L-seryl-tRNA(Sec) + AMP + diphosphate + H(+). The protein operates within aminoacyl-tRNA biosynthesis; selenocysteinyl-tRNA(Sec) biosynthesis; L-seryl-tRNA(Sec) from L-serine and tRNA(Sec): step 1/1. In terms of biological role, catalyzes the attachment of serine to tRNA(Ser). Is also able to aminoacylate tRNA(Sec) with serine, to form the misacylated tRNA L-seryl-tRNA(Sec), which will be further converted into selenocysteinyl-tRNA(Sec). This is Serine--tRNA ligase from Legionella pneumophila (strain Paris).